We begin with the raw amino-acid sequence, 253 residues long: Demethylmenaquinone methyltransferase (253 aa).

S-adenosyl-L-methionine-binding positions include Thr62, Asp80, 102-103 (DA), and Ser119.

Belongs to the class I-like SAM-binding methyltransferase superfamily. MenG/UbiE family.

The catalysed reaction is a 2-demethylmenaquinol + S-adenosyl-L-methionine = a menaquinol + S-adenosyl-L-homocysteine + H(+). Its pathway is quinol/quinone metabolism; menaquinone biosynthesis; menaquinol from 1,4-dihydroxy-2-naphthoate: step 2/2. Its function is as follows. Methyltransferase required for the conversion of demethylmenaquinol (DMKH2) to menaquinol (MKH2). The chain is Demethylmenaquinone methyltransferase from Paenarthrobacter aurescens (strain TC1).